We begin with the raw amino-acid sequence, 550 residues long: Probable acyl-activating enzyme 9 (550 aa).

The protein belongs to the ATP-dependent AMP-binding enzyme family. In terms of tissue distribution, expressed in leaves, flowers and developing seeds.

Its function is as follows. May act as an acid--thiol ligase that activates carboxylic acids by forming acyl-CoAs. This chain is Probable acyl-activating enzyme 9 (AEE9), found in Arabidopsis thaliana (Mouse-ear cress).